The primary structure comprises 322 residues: 4-hydroxy-3-methylbut-2-enyl diphosphate reductase (322 aa).

Residue C15 coordinates [4Fe-4S] cluster. Residues H44 and H77 each contribute to the (2E)-4-hydroxy-3-methylbut-2-enyl diphosphate site. Residues H44 and H77 each contribute to the dimethylallyl diphosphate site. The isopentenyl diphosphate site is built by H44 and H77. Residue C99 participates in [4Fe-4S] cluster binding. H127 is a binding site for (2E)-4-hydroxy-3-methylbut-2-enyl diphosphate. H127 contacts dimethylallyl diphosphate. Position 127 (H127) interacts with isopentenyl diphosphate. The Proton donor role is filled by E129. Residue T168 participates in (2E)-4-hydroxy-3-methylbut-2-enyl diphosphate binding. Residue C198 coordinates [4Fe-4S] cluster. (2E)-4-hydroxy-3-methylbut-2-enyl diphosphate contacts are provided by S226, S227, N228, and S270. 4 residues coordinate dimethylallyl diphosphate: S226, S227, N228, and S270. Isopentenyl diphosphate-binding residues include S226, S227, N228, and S270.

It belongs to the IspH family. Requires [4Fe-4S] cluster as cofactor.

The catalysed reaction is isopentenyl diphosphate + 2 oxidized [2Fe-2S]-[ferredoxin] + H2O = (2E)-4-hydroxy-3-methylbut-2-enyl diphosphate + 2 reduced [2Fe-2S]-[ferredoxin] + 2 H(+). It carries out the reaction dimethylallyl diphosphate + 2 oxidized [2Fe-2S]-[ferredoxin] + H2O = (2E)-4-hydroxy-3-methylbut-2-enyl diphosphate + 2 reduced [2Fe-2S]-[ferredoxin] + 2 H(+). It functions in the pathway isoprenoid biosynthesis; dimethylallyl diphosphate biosynthesis; dimethylallyl diphosphate from (2E)-4-hydroxy-3-methylbutenyl diphosphate: step 1/1. It participates in isoprenoid biosynthesis; isopentenyl diphosphate biosynthesis via DXP pathway; isopentenyl diphosphate from 1-deoxy-D-xylulose 5-phosphate: step 6/6. Catalyzes the conversion of 1-hydroxy-2-methyl-2-(E)-butenyl 4-diphosphate (HMBPP) into a mixture of isopentenyl diphosphate (IPP) and dimethylallyl diphosphate (DMAPP). Acts in the terminal step of the DOXP/MEP pathway for isoprenoid precursor biosynthesis. This chain is 4-hydroxy-3-methylbut-2-enyl diphosphate reductase, found in Neisseria meningitidis serogroup A / serotype 4A (strain DSM 15465 / Z2491).